We begin with the raw amino-acid sequence, 250 residues long: Homeobox protein DLL-1 (250 aa).

Disordered regions lie at residues 40-66 (YPSL…SGSN) and 84-106 (SPYL…PDQQ). Polar residues predominate over residues 84 to 98 (SPYLQSCNSNTTTQS). Residues 125–184 (IRKPRTIYSSLQLQALNHRFQQTQYLALPERAELAASLGVTQTQVKIWFQNKRSKYKKLI) constitute a DNA-binding region (homeobox).

It belongs to the distal-less homeobox family.

The protein localises to the nucleus. The protein is Homeobox protein DLL-1 (dll1) of Xenopus laevis (African clawed frog).